A 306-amino-acid polypeptide reads, in one-letter code: Tryptophan 2,3-dioxygenase (306 aa).

Residues 1–29 (MQPPGDDAAPRCPFAGAHAPDAPHVPEAA) are disordered. Substrate-binding positions include 75-79 (FIIQH), tyrosine 137, and arginine 141. Heme is bound at residue histidine 264. Threonine 278 lines the substrate pocket.

The protein belongs to the tryptophan 2,3-dioxygenase family. In terms of assembly, homotetramer. Requires heme as cofactor.

The enzyme catalyses L-tryptophan + O2 = N-formyl-L-kynurenine. It functions in the pathway amino-acid degradation; L-tryptophan degradation via kynurenine pathway; L-kynurenine from L-tryptophan: step 1/2. In terms of biological role, heme-dependent dioxygenase that catalyzes the oxidative cleavage of the L-tryptophan (L-Trp) pyrrole ring and converts L-tryptophan to N-formyl-L-kynurenine. Catalyzes the oxidative cleavage of the indole moiety. The chain is Tryptophan 2,3-dioxygenase from Burkholderia mallei (strain NCTC 10247).